Consider the following 265-residue polypeptide: Mlc titration factor A (265 aa).

Histidine 111, histidine 148, histidine 152, and glutamate 211 together coordinate Zn(2+).

It belongs to the MtfA family. As to quaternary structure, interacts with Mlc. Zn(2+) is required as a cofactor.

The protein resides in the cytoplasm. Functionally, involved in the modulation of the activity of the glucose-phosphotransferase system (glucose-PTS). Interacts with the transcriptional repressor Mlc, preventing its interaction with DNA and leading to the modulation of expression of genes regulated by Mlc, including ptsG, which encodes the PTS system glucose-specific EIICB component. Shows zinc-dependent metallopeptidase activity. The sequence is that of Mlc titration factor A from Salmonella enteritidis PT4 (strain P125109).